The following is a 390-amino-acid chain: Alcohol dehydrogenase-like 7 (390 aa).

Residues Cys56, Ser58, His78, Cys108, Cys111, Cys114, Cys122, and Cys187 each contribute to the Zn(2+) site. 2 residues coordinate an alcohol: Ser58 and His78. Ser58 serves as a coordination point for NAD(+). Residues 212 to 217 (GLGSIG), Asp236, Lys241, 306 to 308 (LGV), Phe334, and Arg384 each bind NAD(+).

It belongs to the zinc-containing alcohol dehydrogenase family. Class-III subfamily. Homodimer. Requires Zn(2+) as cofactor.

The protein resides in the cytoplasm. The catalysed reaction is a primary alcohol + NAD(+) = an aldehyde + NADH + H(+). It catalyses the reaction a secondary alcohol + NAD(+) = a ketone + NADH + H(+). The sequence is that of Alcohol dehydrogenase-like 7 from Arabidopsis thaliana (Mouse-ear cress).